The following is a 100-amino-acid chain: Urease subunit gamma (100 aa).

This sequence belongs to the urease gamma subunit family. In terms of assembly, heterotrimer of UreA (gamma), UreB (beta) and UreC (alpha) subunits. Three heterotrimers associate to form the active enzyme.

The protein resides in the cytoplasm. The enzyme catalyses urea + 2 H2O + H(+) = hydrogencarbonate + 2 NH4(+). It participates in nitrogen metabolism; urea degradation; CO(2) and NH(3) from urea (urease route): step 1/1. The polypeptide is Urease subunit gamma (Sinorhizobium fredii (strain NBRC 101917 / NGR234)).